Here is a 126-residue protein sequence, read N- to C-terminus: Nascent polypeptide-associated complex protein (126 aa).

One can recognise an NAC-A/B domain in the interval Pro-10–Lys-77.

This sequence belongs to the NAC-alpha family. As to quaternary structure, homodimer. Interacts with the ribosome. Binds ribosomal RNA.

Contacts the emerging nascent chain on the ribosome. This chain is Nascent polypeptide-associated complex protein, found in Methanococcus maripaludis (strain C7 / ATCC BAA-1331).